A 169-amino-acid polypeptide reads, in one-letter code: NADH-quinone oxidoreductase subunit B (169 aa).

[4Fe-4S] cluster-binding residues include cysteine 42, cysteine 43, cysteine 107, and cysteine 136.

The protein belongs to the complex I 20 kDa subunit family. In terms of assembly, NDH-1 is composed of 14 different subunits. Subunits NuoB, C, D, E, F, and G constitute the peripheral sector of the complex. Requires [4Fe-4S] cluster as cofactor.

It localises to the cell inner membrane. The enzyme catalyses a quinone + NADH + 5 H(+)(in) = a quinol + NAD(+) + 4 H(+)(out). Its function is as follows. NDH-1 shuttles electrons from NADH, via FMN and iron-sulfur (Fe-S) centers, to quinones in the respiratory chain. The immediate electron acceptor for the enzyme in this species is believed to be ubiquinone. Couples the redox reaction to proton translocation (for every two electrons transferred, four hydrogen ions are translocated across the cytoplasmic membrane), and thus conserves the redox energy in a proton gradient. This chain is NADH-quinone oxidoreductase subunit B, found in Wolinella succinogenes (strain ATCC 29543 / DSM 1740 / CCUG 13145 / JCM 31913 / LMG 7466 / NCTC 11488 / FDC 602W) (Vibrio succinogenes).